The sequence spans 138 residues: Basic phospholipase A2 chain HDP-2P (138 aa).

The first 16 residues, 1–16 (MRILWIVAVCLIGVEG), serve as a signal peptide directing secretion. Disulfide bonds link Cys-42–Cys-131, Cys-44–Cys-60, Cys-59–Cys-111, Cys-65–Cys-138, Cys-66–Cys-104, Cys-73–Cys-97, and Cys-91–Cys-102. Ca(2+)-binding residues include Tyr-43, Gly-45, and Gly-47. The active site involves His-63. Asp-64 contacts Ca(2+). Asp-105 is a catalytic residue.

Heterodimer of an acidic and a basic chain; non-covalently linked. The toxic basic protein has phospholipase A2 activity (chain HDP-2P) and the non-toxic acidic protein functions as its inhibitor (chain HPD-1I (AC A4VBF0)). The cofactor is Ca(2+). In terms of tissue distribution, expressed by the venom gland.

Its subcellular location is the secreted. It catalyses the reaction a 1,2-diacyl-sn-glycero-3-phosphocholine + H2O = a 1-acyl-sn-glycero-3-phosphocholine + a fatty acid + H(+). Enzymatic activity and neurotoxicity are inhibited by Triton X-100. Triton X-100 has been determined to be located in the center of the hydrophobic channel of the enzyme. In terms of biological role, monomer: snake venom phospholipase A2 (PLA2) that affects neuromuscular transmission presynaptically. It has catalytic activity, anticoagulant activity and weakly inhibits ADP-induced platelet aggregation. PLA2 catalyzes the calcium-dependent hydrolysis of the 2-acyl groups in 3-sn-phosphoglycerides. Its function is as follows. Heterodimer: shows the same activities as the monomer, but with a lower potency. In Vipera nikolskii (Nikolsky's adder), this protein is Basic phospholipase A2 chain HDP-2P.